We begin with the raw amino-acid sequence, 224 residues long: Small ribosomal subunit protein uS3 (224 aa).

The KH type-2 domain maps to 39-107 (IREFLKKKPS…DVWVEIAEVK (69 aa)).

The protein belongs to the universal ribosomal protein uS3 family. In terms of assembly, part of the 30S ribosomal subunit. Forms a tight complex with proteins S10 and S14.

In terms of biological role, binds the lower part of the 30S subunit head. Binds mRNA in the 70S ribosome, positioning it for translation. This chain is Small ribosomal subunit protein uS3, found in Chlamydia trachomatis serovar A (strain ATCC VR-571B / DSM 19440 / HAR-13).